Reading from the N-terminus, the 282-residue chain is Uracil-DNA glycosylase (282 aa).

A disordered region spans residues 15–40; that stretch reads SAASKRKSASNTENIPEKVPAGNENQ. The Proton acceptor role is filled by aspartate 123.

It belongs to the uracil-DNA glycosylase (UDG) superfamily. UNG family.

The protein resides in the mitochondrion. Its subcellular location is the nucleus. The enzyme catalyses Hydrolyzes single-stranded DNA or mismatched double-stranded DNA and polynucleotides, releasing free uracil.. Its activity is regulated as follows. Inhibited by UGI, a B.subtilis bacteriophage PBS2 peptide inhibitor. Excises uracil residues from the DNA which can arise as a result of misincorporation of dUMP residues by DNA polymerase or due to deamination of cytosine. The sequence is that of Uracil-DNA glycosylase from Caenorhabditis elegans.